A 495-amino-acid chain; its full sequence is Pre-glycoprotein polyprotein GP complex (495 aa).

Glycine 2 carries N-myristoyl glycine; by host lipidation. At 2–17 the chain is on the extracellular side; the sequence is GQFISFMQEIPIFLQE. A helical transmembrane segment spans residues 18 to 33; that stretch reads ALNIALVAVSLICIVK. At 34–58 the chain is on the cytoplasmic side; the sequence is GLVNLYRCGLFQLMVFLVLAGRSCS. A Zn(2+)-binding site is contributed by cysteine 57. Residues 59-434 are Extracellular-facing; the sequence is EETFKIGMHT…QGRTPITLVD (376 aa). 4 disulfides stabilise this stretch: cysteine 92–cysteine 236, cysteine 281–cysteine 294, cysteine 303–cysteine 312, and cysteine 366–cysteine 387. N-linked (GlcNAc...) asparagine; by host glycosylation is found at asparagine 95 and asparagine 188. N-linked (GlcNAc...) asparagine; by host glycans are attached at residues asparagine 367, asparagine 375, asparagine 392, and asparagine 397. The chain crosses the membrane as a helical span at residues 435-455; that stretch reads ICFWSTVFFTSTLFLHLIGFP. Topologically, residues 456–495 are cytoplasmic; it reads THEHIRGEGCPLPHRLNSMGGCRCGKYLPLKKPTIWHRRH. Residues histidine 457, histidine 459, cysteine 465, histidine 469, cysteine 477, cysteine 479, and histidine 495 each coordinate Zn(2+).

It belongs to the arenaviridae GPC protein family. In terms of assembly, interacts with glycoprotein G2. Part of the GP complex (GP-C) together with glycoprotein G1 and glycoprotein G2. The GP-complex interacts with protein Z, which interacts with ribonucleocapsid; these interactions may induce virion budding. Homotrimer; disulfide-linked. In pre-fusion state, G1 homotrimers bind G2 homotrimers via ionic interactions. Part of the GP complex (GP-C) together with glycoprotein G2 and the stable signal peptide. The GP-complex interacts with protein Z, which interacts with ribonucleocapsid; these interactions may induce virion budding. As to quaternary structure, homotrimer. Interacts with the stable signal peptide. In pre-fusion state, G2 homotrimers bind G1 homotrimers via ionic interactions. Part of the GP complex (GP-C) together with glycoprotein G1 and the stable signal peptide. Acidification in the endosome triggers rearrangements, which ultimately leads to a 6 helix bundle formed by the two heptad repeat domains (HR1 and HR2) in post-fusion state. The GP-complex interacts with protein Z, which interacts with ribonucleocapsid; these interactions may induce virion budding. Specific enzymatic cleavages in vivo yield mature proteins. GP-C polyprotein is cleaved in the endoplasmic reticulum by the host protease MBTPS1. Only cleaved glycoprotein is incorporated into virions. Post-translationally, the SSP remains stably associated with the GP complex following cleavage by signal peptidase and plays crucial roles in the trafficking of GP through the secretory pathway. In terms of processing, myristoylation is necessary for GP2-mediated fusion activity.

It is found in the virion membrane. The protein localises to the host endoplasmic reticulum membrane. The protein resides in the host Golgi apparatus membrane. Its subcellular location is the host cell membrane. Functionally, functions as a cleaved signal peptide that is retained as the third component of the GP complex (GP-C). Helps to stabilize the spike complex in its native conformation. The SSP is required for efficient glycoprotein expression, post-translational maturation cleavage of G1 and G2, glycoprotein transport to the cell surface plasma membrane, formation of infectious virus particles, and acid pH-dependent glycoprotein-mediated cell fusion. Forms the virion spikes together with glycoprotein G2. The glycoprotein spike trimers are connected to the underlying matrix. Interacts with the host receptor leading to virus endocytosis. Its function is as follows. Forms the virion spikes together with glycoprotein G1. The glycoprotein spike trimers are connected to the underlying matrix. Class I viral fusion protein that directs fusion of viral and host endosomal membranes, leading to delivery of the nucleocapsid into the cytoplasm. Membrane fusion is mediated by irreversible conformational changes induced by acidification. This chain is Pre-glycoprotein polyprotein GP complex, found in Tacaribe virus (strain Franze-Fernandez) (TCRV).